The primary structure comprises 280 residues: Ribosomal RNA small subunit methyltransferase A (280 aa).

Positions 15, 17, 42, 64, 89, and 109 each coordinate S-adenosyl-L-methionine.

It belongs to the class I-like SAM-binding methyltransferase superfamily. rRNA adenine N(6)-methyltransferase family. RsmA subfamily.

The protein resides in the cytoplasm. It carries out the reaction adenosine(1518)/adenosine(1519) in 16S rRNA + 4 S-adenosyl-L-methionine = N(6)-dimethyladenosine(1518)/N(6)-dimethyladenosine(1519) in 16S rRNA + 4 S-adenosyl-L-homocysteine + 4 H(+). Its function is as follows. Specifically dimethylates two adjacent adenosines (A1518 and A1519) in the loop of a conserved hairpin near the 3'-end of 16S rRNA in the 30S particle. May play a critical role in biogenesis of 30S subunits. The protein is Ribosomal RNA small subunit methyltransferase A of Synechococcus sp. (strain WH7803).